The chain runs to 342 residues: S-adenosylmethionine:tRNA ribosyltransferase-isomerase (342 aa).

This sequence belongs to the QueA family. Monomer.

Its subcellular location is the cytoplasm. The enzyme catalyses 7-aminomethyl-7-carbaguanosine(34) in tRNA + S-adenosyl-L-methionine = epoxyqueuosine(34) in tRNA + adenine + L-methionine + 2 H(+). It participates in tRNA modification; tRNA-queuosine biosynthesis. Functionally, transfers and isomerizes the ribose moiety from AdoMet to the 7-aminomethyl group of 7-deazaguanine (preQ1-tRNA) to give epoxyqueuosine (oQ-tRNA). In Bacillus subtilis (strain 168), this protein is S-adenosylmethionine:tRNA ribosyltransferase-isomerase.